We begin with the raw amino-acid sequence, 147 residues long: Flagellar assembly factor FliW (147 aa).

The protein belongs to the FliW family. As to quaternary structure, interacts with translational regulator CsrA and flagellin(s).

Its subcellular location is the cytoplasm. Its function is as follows. Acts as an anti-CsrA protein, binds CsrA and prevents it from repressing translation of its target genes, one of which is flagellin. Binds to flagellin and participates in the assembly of the flagellum. The sequence is that of Flagellar assembly factor FliW from Oceanobacillus iheyensis (strain DSM 14371 / CIP 107618 / JCM 11309 / KCTC 3954 / HTE831).